The sequence spans 163 residues: Ribonuclease P protein subunit p25-like protein (163 aa).

Disordered stretches follow at residues M1–D24 and L126–S163. Basic residues predominate over residues R153–S163.

It belongs to the histone-like Alba family.

It localises to the nucleus. May be a component of ribonuclease P or MRP. The chain is Ribonuclease P protein subunit p25-like protein (Rpp25l) from Mus musculus (Mouse).